The primary structure comprises 390 residues: GTPase Obg (390 aa).

An Obg domain is found at 1-159; the sequence is MKFVDEASIL…RELLLELMLL (159 aa). Residues 127–147 are disordered; sequence NTRFKSSVNRTPRQKTNGTPG. Positions 129 to 145 are enriched in polar residues; sequence RFKSSVNRTPRQKTNGT. The OBG-type G domain occupies 160–333; it reads ADVGMLGMPN…LCWDVMTFII (174 aa). GTP-binding positions include 166-173, 191-195, 213-216, 283-286, and 314-316; these read GMPNAGKS, FTTLV, DIPG, NKID, and SAA. The Mg(2+) site is built by serine 173 and threonine 193.

The protein belongs to the TRAFAC class OBG-HflX-like GTPase superfamily. OBG GTPase family. As to quaternary structure, monomer. Mg(2+) serves as cofactor.

It localises to the cytoplasm. Its function is as follows. An essential GTPase which binds GTP, GDP and possibly (p)ppGpp with moderate affinity, with high nucleotide exchange rates and a fairly low GTP hydrolysis rate. Plays a role in control of the cell cycle, stress response, ribosome biogenesis and in those bacteria that undergo differentiation, in morphogenesis control. In Escherichia coli O7:K1 (strain IAI39 / ExPEC), this protein is GTPase Obg.